The following is a 254-amino-acid chain: tRNA (guanine-N(7)-)-methyltransferase (254 aa).

The disordered stretch occupies residues 1–34 (MNTNTPAHPPEGAPLSEATQAALASAEHAPDSPG). S-adenosyl-L-methionine contacts are provided by glutamate 87, glutamate 112, aspartate 139, and aspartate 162. The active site involves aspartate 162. Substrate-binding positions include lysine 166, aspartate 198, and 233–236 (TKFE).

The protein belongs to the class I-like SAM-binding methyltransferase superfamily. TrmB family.

It catalyses the reaction guanosine(46) in tRNA + S-adenosyl-L-methionine = N(7)-methylguanosine(46) in tRNA + S-adenosyl-L-homocysteine. Its pathway is tRNA modification; N(7)-methylguanine-tRNA biosynthesis. In terms of biological role, catalyzes the formation of N(7)-methylguanine at position 46 (m7G46) in tRNA. The protein is tRNA (guanine-N(7)-)-methyltransferase of Bordetella bronchiseptica (strain ATCC BAA-588 / NCTC 13252 / RB50) (Alcaligenes bronchisepticus).